The chain runs to 162 residues: Cyanate hydratase (162 aa).

Active-site residues include Arg-102, Glu-105, and Ser-128.

Belongs to the cyanase family.

The enzyme catalyses cyanate + hydrogencarbonate + 3 H(+) = NH4(+) + 2 CO2. Its function is as follows. Catalyzes the reaction of cyanate with bicarbonate to produce ammonia and carbon dioxide. The sequence is that of Cyanate hydratase from Mycosarcoma maydis (Corn smut fungus).